Here is a 257-residue protein sequence, read N- to C-terminus: Probable amino-acid ABC transporter ATP-binding protein HI_1078 (257 aa).

Residues 4-244 form the ABC transporter domain; that stretch reads LKVSNIQKNF…PQHERTKQFL (241 aa). 36–43 lines the ATP pocket; sequence GPSGSGKT.

It belongs to the ABC transporter superfamily.

Its subcellular location is the cell inner membrane. In terms of biological role, probably part of a binding-protein-dependent transport system for an amino acid. Probably responsible for energy coupling to the transport system. The polypeptide is Probable amino-acid ABC transporter ATP-binding protein HI_1078 (Haemophilus influenzae (strain ATCC 51907 / DSM 11121 / KW20 / Rd)).